The following is a 32-amino-acid chain: GGSVPCGESCVFIPCITSLAGCSCKNKVCYYD.

The cyclopeptide (Gly-Asp) cross-link spans 1 to 32 (GGSVPCGESCVFIPCITSLAGCSCKNKVCYYD). 3 disulfides stabilise this stretch: Cys6–Cys22, Cys10–Cys24, and Cys15–Cys29.

In terms of processing, this is a cyclic peptide. As to expression, expressed in leaves, flowers, peduncles and seeds (at protein level).

In terms of biological role, probably participates in a plant defense mechanism. Reduces growth of and increases mortality in larvae of D.saccharalis. Kills cultured SF-9 cells of S.frugiperda probably by disrupting plasma membranes. Has hemolytic activity against human erythrocytes. Has no antibacterial activity against E.coli strain ATCC 8739 and S.aureus strain ATCC 25923. In Palicourea rigida, this protein is Parigidin-br1.